We begin with the raw amino-acid sequence, 77 residues long: uncharacterized protein (77 aa).

Residues 1–77 (MAFERQGKIE…VAILDGKLVW (77 aa)) enclose the Peptidase A1 domain.

This is an uncharacterized protein from Saccharomyces cerevisiae (strain ATCC 204508 / S288c) (Baker's yeast).